The sequence spans 674 residues: Electrogenic aspartate/glutamate antiporter SLC25A13, mitochondrial (674 aa).

An N-acetylalanine modification is found at alanine 2. Positions 2-295 (AAAKVALTKR…TLADIERIAP (294 aa)) are regulatory N-terminal domain. Over 2 to 331 (AAAKVALTKR…LLQVAESAYR (330 aa)) the chain is Mitochondrial intermembrane. EF-hand domains follow at residues 51-86 (SQPN…SVLC), 87-122 (APDA…TTIH), 123-157 (QHIP…FLLE), and 158-193 (IQLE…IRPH). 5 residues coordinate Ca(2+): aspartate 66, threonine 68, aspartate 70, leucine 72, and glutamate 77. The segment at 296–311 (LEEGTLPFNLAEAQRQ) is linker loop domain. Residues 321–611 (VLLQVAESAY…LQRWFYIDFG (291 aa)) form a carrier domain region. Solcar repeat units follow at residues 326-418 (AESA…VRDK), 426-510 (VPLA…ARAS), and 518-605 (VSPG…LQRW). Residues 332-349 (FGLGSVAGAVGATAVYPI) form a helical membrane-spanning segment. The Mitochondrial matrix portion of the chain corresponds to 350 to 392 (DLVKTRMQNQRSTGSFVGELMYKNSFDCFKKVLRYEGFFGLYR). Lysine 353 and lysine 372 each carry N6-acetyllysine. The chain crosses the membrane as a helical span at residues 393–412 (GLLPQLLGVAPEKAIKLTVN). Residues 413-435 (DFVRDKFMHKDGSVPLAAEILAG) are Mitochondrial intermembrane-facing. The chain crosses the membrane as a helical span at residues 436–449 (GCAGGSQVIFTNPL). The Mitochondrial matrix segment spans residues 450-484 (EIVKIRLQVAGEITTGPRVSALSVVRDLGFFGIYK). Residue lysine 453 is modified to N6-methyllysine. Lysine 484 carries the post-translational modification N6-acetyllysine; alternate. Lysine 484 carries the post-translational modification N6-succinyllysine; alternate. A helical transmembrane segment spans residues 485 to 504 (GAKACFLRDIPFSAIYFPCY). Residues 505–523 (AHARASFANEDGQVSPGSL) are Mitochondrial intermembrane-facing. A helical membrane pass occupies residues 524–541 (LLAGAIAGMPAASLVTPA). The Mitochondrial matrix segment spans residues 542 to 580 (DVIKTRLQVAARAGQTTYSGVIDCFKKILREEGPKALWK). The residue at position 580 (lysine 580) is an N6-succinyllysine. The chain crosses the membrane as a helical span at residues 581 to 599 (GAARVFRSSPQFGVTLLTY). Residues 600 to 674 (ELLQRWFYID…PTSEAIGGGP (75 aa)) are Mitochondrial intermembrane-facing. The C-terminal domain stretch occupies residues 612 to 674 (GVKPMGSEPV…PTSEAIGGGP (63 aa)). The residue at position 661 (lysine 661) is an N6-acetyllysine.

The protein belongs to the mitochondrial carrier (TC 2.A.29) family. Homodimer (via N-terminus).

It is found in the mitochondrion inner membrane. The enzyme catalyses L-aspartate(in) + L-glutamate(out) + H(+)(out) = L-aspartate(out) + L-glutamate(in) + H(+)(in). It carries out the reaction 3-sulfino-L-alanine(out) + L-glutamate(in) + H(+)(in) = 3-sulfino-L-alanine(in) + L-glutamate(out) + H(+)(out). It catalyses the reaction 3-sulfino-L-alanine(out) + L-aspartate(in) = 3-sulfino-L-alanine(in) + L-aspartate(out). In terms of biological role, mitochondrial electrogenic aspartate/glutamate antiporter that favors efflux of aspartate and entry of glutamate and proton within the mitochondria as part of the malate-aspartate shuttle. Also mediates the uptake of L-cysteinesulfinate (3-sulfino-L-alanine) by mitochondria in exchange of L-glutamate and proton. Can also exchange L-cysteinesulfinate with aspartate in their anionic form without any proton translocation. Lacks transport activity towards gamma-aminobutyric acid (GABA). This chain is Electrogenic aspartate/glutamate antiporter SLC25A13, mitochondrial, found in Macaca fascicularis (Crab-eating macaque).